Consider the following 363-residue polypeptide: Pyruvate dehydrogenase E1 component subunit alpha, mitochondrial (363 aa).

The N-terminal 2 residues, 1–2, are a transit peptide targeting the mitochondrion; that stretch reads RN. The residue at position 36 (Lys36) is an N6-acetyllysine; alternate. Position 36 is an N6-succinyllysine; alternate (Lys36). His65, Tyr91, Arg92, Ala130, Gly138, Val140, Asp169, Gly170, Ala171, Asn198, and Tyr200 together coordinate pyruvate. The thiamine diphosphate site is built by Tyr91 and Arg92. Thiamine diphosphate-binding residues include Gly138, Val140, Asp169, Gly170, Ala171, and Asn198. Position 169 (Asp169) interacts with Mg(2+). Mg(2+) contacts are provided by Asn198 and Tyr200. Ser205 carries the phosphoserine; by PDK1 modification. Lys217 is modified (N6-acetyllysine; alternate). Lys217 bears the N6-succinyllysine; alternate mark. At Lys240 the chain carries N6-acetyllysine. An N6-succinyllysine modification is found at Lys250. Residue His265 coordinates thiamine diphosphate. Ser266 bears the Phosphoserine; by PDK1, PDK2, PDK3 and PDK4 mark. Ser268 carries the post-translational modification Phosphoserine. The residue at position 273 (Ser273) is a Phosphoserine; by PDK1, PDK2, PDK3 and PDK4. Tyr274 is subject to Phosphotyrosine. Lys286 bears the N6-acetyllysine; alternate mark. An N6-succinyllysine; alternate modification is found at Lys286. Lys294 and Lys309 each carry N6-acetyllysine. The residue at position 358 (Lys358) is an N6-succinyllysine.

Heterotetramer of two PDHA1 and two PDHB subunits. The heterotetramer interacts with DLAT, and is part of the multimeric pyruvate dehydrogenase complex that contains multiple copies of pyruvate dehydrogenase (E1), dihydrolipoamide acetyltransferase (DLAT, E2) and lipoamide dehydrogenase (DLD, E3). These subunits are bound to an inner core composed of about 48 DLAT and 12 PDHX molecules. Thiamine diphosphate is required as a cofactor. The cofactor is Mg(2+). Phosphorylation at Ser-205, Ser-266 and Ser-273 by PDK family kinases inactivates the enzyme; for this phosphorylation at a single site is sufficient. Phosphorylation at Ser-266 interferes with access to active site, and thereby inactivates the enzyme. Dephosphorylation at all three sites, i.e. at Ser-205, Ser-266 and Ser-273, is required for reactivation. In terms of processing, acetylation alters the phosphorylation pattern. Deacetylated by SIRT3.

It localises to the mitochondrion matrix. It carries out the reaction N(6)-[(R)-lipoyl]-L-lysyl-[protein] + pyruvate + H(+) = N(6)-[(R)-S(8)-acetyldihydrolipoyl]-L-lysyl-[protein] + CO2. Its activity is regulated as follows. Pyruvate dehydrogenase activity is inhibited by phosphorylation of PDHA1; it is reactivated by dephosphorylation. Functionally, the pyruvate dehydrogenase complex catalyzes the overall conversion of pyruvate to acetyl-CoA and CO(2), and thereby links the glycolytic pathway to the tricarboxylic cycle. The chain is Pyruvate dehydrogenase E1 component subunit alpha, mitochondrial (PDHA) from Sminthopsis macroura (Stripe-faced dunnart).